Here is a 141-residue protein sequence, read N- to C-terminus: Transmembrane protein 216 (141 aa).

4 helical membrane passes run 15–35, 49–69, 82–102, and 115–135; these read ILFFLNGWYYATYFLLELFIF, LVLDVVMLFLYLGVEVIRLFF, LGISVALTFPSTMMASYYLLL, and SILLFFCGSELLLEVLTLTAF.

Part of the tectonic-like complex (also named B9 complex). Interacts with TMEM107.

It localises to the membrane. The protein resides in the cytoplasm. It is found in the cytoskeleton. Its subcellular location is the cilium basal body. Its function is as follows. Part of the tectonic-like complex which is required for tissue-specific ciliogenesis and may regulate ciliary membrane composition. The polypeptide is Transmembrane protein 216 (TMEM216) (Bos taurus (Bovine)).